Consider the following 246-residue polypeptide: Small ribosomal subunit protein uS2 (246 aa).

It belongs to the universal ribosomal protein uS2 family.

The polypeptide is Small ribosomal subunit protein uS2 (Burkholderia pseudomallei (strain 668)).